A 1308-amino-acid polypeptide reads, in one-letter code: Tau-tubulin kinase 1 (1308 aa).

Residues 34 to 297 (WKVLKKIGGG…LIMSVFENSM (264 aa)) enclose the Protein kinase domain. Residues 40–48 (IGGGGFGEI) and Lys-63 each bind ATP. The active-site Proton acceptor is Asp-154. 6 disordered regions span residues 364–397 (LSDQ…GPEA), 418–448 (PCVE…PVRS), 474–671 (ERRS…APPF), 720–899 (QVPL…AGGG), 985–1085 (EMES…LARL), and 1097–1308 (RLAS…PGAR). Residue Ser-441 is modified to Phosphoserine. Residues 485–496 (PSRQACSSQPAQ) are compositionally biased toward polar residues. Ser-541 bears the Phosphoserine mark. 2 stretches are compositionally biased toward basic and acidic residues: residues 541–555 (SKEW…ELKD) and 574–589 (ELRP…RRLG). Positions 638 to 647 (SPSHSPLHSG) are enriched in low complexity. Residues 735-769 (GEEEEEEEEEEEEEEEEEEEEEEEEEEEEEEEEEA) are compositionally biased toward acidic residues. Positions 786–795 (GSERSTERSQ) are enriched in basic and acidic residues. 2 stretches are compositionally biased toward polar residues: residues 868–885 (PTGS…SSIL) and 1020–1035 (ASQQ…TISP). Low complexity predominate over residues 1097–1107 (RLASGASSSSS).

This sequence belongs to the protein kinase superfamily. CK1 Ser/Thr protein kinase family. The cofactor is Mg(2+). Mn(2+) serves as cofactor. As to expression, expressed in the brain. Strong expression in the cortical layers, the CA1 layers of the hippocampus and the granular layer of the cerebellum. Also expressed in the large cortical pyramidal cells in the temporal cortex, the CA1 pyramidal neurons and the cerebellum granular neurons.

Its subcellular location is the cytoplasm. It catalyses the reaction L-seryl-[protein] + ATP = O-phospho-L-seryl-[protein] + ADP + H(+). The catalysed reaction is L-threonyl-[protein] + ATP = O-phospho-L-threonyl-[protein] + ADP + H(+). Its function is as follows. Serine/threonine kinase which is able to phosphorylate TAU on serine, threonine and tyrosine residues. Induces aggregation of TAU. The sequence is that of Tau-tubulin kinase 1 (Ttbk1) from Mus musculus (Mouse).